The chain runs to 264 residues: TLC domain-containing protein 4-B (264 aa).

The next 6 membrane-spanning stretches (helical) occupy residues valine 6–valine 26, leucine 50–aspartate 70, leucine 84–alanine 104, methionine 110–leucine 130, leucine 169–methionine 189, and leucine 210–tryptophan 230. Residues asparagine 41–threonine 243 form the TLC domain.

The protein belongs to the TLCD4 family.

It localises to the membrane. The sequence is that of TLC domain-containing protein 4-B (tlcd4b) from Danio rerio (Zebrafish).